Reading from the N-terminus, the 321-residue chain is Carnitine monooxygenase reductase subunit (321 aa).

Residues 4 to 109 (YQMFEVQVSQ…STPNNLFALI (106 aa)) form the FAD-binding FR-type domain. The 2Fe-2S ferredoxin-type domain maps to 233 to 321 (DAFTLVLARS…AKGKRLVLDL (89 aa)). Positions 270, 275, 278, and 308 each coordinate [2Fe-2S] cluster.

The protein belongs to the PDR/VanB family. CntB subfamily. As to quaternary structure, composed of an oxygenase subunit (yeaW) and a reductase subunit (yeaX). Requires FMN as cofactor. [2Fe-2S] cluster serves as cofactor.

It carries out the reaction (R)-carnitine + NADH + O2 + H(+) = (3R)-3-hydroxy-4-oxobutanoate + trimethylamine + NAD(+) + H2O. The catalysed reaction is (R)-carnitine + NADPH + O2 + H(+) = (3R)-3-hydroxy-4-oxobutanoate + trimethylamine + NADP(+) + H2O. Its pathway is amine and polyamine metabolism; carnitine metabolism. Its function is as follows. Converts carnitine to trimethylamine and malic semialdehyde. Can also use gamma-butyrobetaine, choline and betaine as substrates. The chain is Carnitine monooxygenase reductase subunit (yeaX) from Escherichia coli (strain K12).